The primary structure comprises 264 residues: MYAQPKLTSAEYVQHHMSHWKLNLHNFTFTDGGFWTLNLDTLIISVVLGALFILIFYIVARRATASVPGKWQNAIEMAVEAADGTVKDSFHGDRSLVAPLALTIFIWVFLMNFMDLVPVDLIPRLFQMGGVEHFKAVPTADPTLTFAMSITVFVLVIFYNFKMKGAIGLGKEVLSRPFGWYLMPINVIFRLIDEGVKPISLALRLFGNLFAGELIFILIALLPWWSQFTLGMVWTLFHLLVITVQAFIFMMLTVVYISLAAESH.

Transmembrane regions (helical) follow at residues 39–59 (LDTL…FYIV), 97–117 (VAPL…MDLV), 139–159 (TADP…VIFY), 205–225 (LFGN…LPWW), and 239–259 (LLVI…YISL).

This sequence belongs to the ATPase A chain family. In terms of assembly, F-type ATPases have 2 components, CF(1) - the catalytic core - and CF(0) - the membrane proton channel. CF(1) has five subunits: alpha(3), beta(3), gamma(1), delta(1), epsilon(1). CF(0) has three main subunits: a(1), b(2) and c(9-12). The alpha and beta chains form an alternating ring which encloses part of the gamma chain. CF(1) is attached to CF(0) by a central stalk formed by the gamma and epsilon chains, while a peripheral stalk is formed by the delta and b chains.

It is found in the cell inner membrane. Key component of the proton channel; it plays a direct role in the translocation of protons across the membrane. This chain is ATP synthase subunit a, found in Coxiella burnetii (strain Dugway 5J108-111).